The primary structure comprises 143 residues: uncharacterized protein (143 aa).

A disordered region spans residues 111–143; the sequence is VTQDISHTSGKSPTPKAKSSSPKKSKKKNWIPL. The span at 119 to 130 shows a compositional bias: low complexity; sequence SGKSPTPKAKSS. Residues 131–143 are compositionally biased toward basic residues; it reads SPKKSKKKNWIPL.

This sequence belongs to the chlamydial CPn_0742/CT_635/TC_0003 family.

This is an uncharacterized protein from Chlamydia muridarum (strain MoPn / Nigg).